The primary structure comprises 510 residues: NAD(P)H-quinone oxidoreductase subunit 2, chloroplastic (510 aa).

12 helical membrane-spanning segments follow: residues 24–44 (LLLF…GLIL), 59–79 (WFYF…FFRW), 99–119 (IFQF…VEYI), 124–144 (MAIT…MFLC), 149–169 (LITI…LSGY), 184–204 (LLMG…LYGL), 229–249 (ISIA…PAPF), 295–315 (WHLL…LIAL), 323–343 (MLAY…IVGD), 354–374 (YMLF…SFGL), 395–415 (ALSS…AGFF), and 418–438 (LYLF…IGLL).

This sequence belongs to the complex I subunit 2 family. In terms of assembly, NDH is composed of at least 16 different subunits, 5 of which are encoded in the nucleus.

It is found in the plastid. The protein resides in the chloroplast thylakoid membrane. The catalysed reaction is a plastoquinone + NADH + (n+1) H(+)(in) = a plastoquinol + NAD(+) + n H(+)(out). It carries out the reaction a plastoquinone + NADPH + (n+1) H(+)(in) = a plastoquinol + NADP(+) + n H(+)(out). Its function is as follows. NDH shuttles electrons from NAD(P)H:plastoquinone, via FMN and iron-sulfur (Fe-S) centers, to quinones in the photosynthetic chain and possibly in a chloroplast respiratory chain. The immediate electron acceptor for the enzyme in this species is believed to be plastoquinone. Couples the redox reaction to proton translocation, and thus conserves the redox energy in a proton gradient. This Coelogyne cristata (Orchid) protein is NAD(P)H-quinone oxidoreductase subunit 2, chloroplastic.